The primary structure comprises 104 residues: Large ribosomal subunit protein uL24 (104 aa).

This sequence belongs to the universal ribosomal protein uL24 family. As to quaternary structure, part of the 50S ribosomal subunit.

In terms of biological role, one of two assembly initiator proteins, it binds directly to the 5'-end of the 23S rRNA, where it nucleates assembly of the 50S subunit. Its function is as follows. One of the proteins that surrounds the polypeptide exit tunnel on the outside of the subunit. In Alteromonas mediterranea (strain DSM 17117 / CIP 110805 / LMG 28347 / Deep ecotype), this protein is Large ribosomal subunit protein uL24.